We begin with the raw amino-acid sequence, 309 residues long: Palmitoyltransferase ZDHHC19 (309 aa).

Helical transmembrane passes span 29 to 49 (LFAAFNVVLLVFFSGLFFAFP) and 59 to 79 (WAFPVITGSLFVLTFFSLVSL). Positions 112–162 (QWCPKCCFHRPPRTYHCPWCNICVEDFDHHCKWVNNCIGHRNFRFFMLLVL) constitute a DHHC domain. Residue C142 is the S-palmitoyl cysteine intermediate of the active site. A run of 2 helical transmembrane segments spans residues 160-180 (LVLSLCLYSGAMLVTCLIFLV) and 193-213 (IAIVVAVSAAGLLVPLSLLLL). Positions 280-294 (LHPPMSPSALNPPAP) are enriched in pro residues. The segment at 280-309 (LHPPMSPSALNPPAPTSGSLQSREGTPGAW) is disordered.

It belongs to the DHHC palmitoyltransferase family.

The protein resides in the golgi apparatus membrane. It localises to the cytoplasm. Its subcellular location is the perinuclear region. It carries out the reaction L-cysteinyl-[protein] + hexadecanoyl-CoA = S-hexadecanoyl-L-cysteinyl-[protein] + CoA. Functionally, palmitoyltransferase that mediates palmitoylation oproteins, such as RRAS and SQSTM1. Catalyzes palmitoylation of RRAS, leading to increased cell viability. Acts as a positive regulator of autophagy by mediating palmitoylation of SQSTM1, promoting affinity between SQSTM1 and ATG8 proteins and recruitment of ubiquitinated cargo proteins to autophagosomes. In terms of biological role, (Microbial infection) Promotes Chikungunya virus (CHIKV) replication by mediating viral nsp1 palmitoylation. This chain is Palmitoyltransferase ZDHHC19, found in Homo sapiens (Human).